A 172-amino-acid polypeptide reads, in one-letter code: MLSSLANPRQAASQLLNFALILSTAFMMWKGLSVVSDSPSPIVVVLSGSMEPAFQRGDLLFLWNRNIIQETEVGEIVVYEVRGKNIPIVHRVVRKFGAGSEAKLLTKGDNNQGSDEELYAKDQDFLVRKDIIGSVVAYIPFVGYVTILLSEYPWLKTAMLGIMGLVVVLQRE.

Residues 1–14 (MLSSLANPRQAASQ) are Cytoplasmic-facing. Residues 15-35 (LLNFALILSTAFMMWKGLSVV) traverse the membrane as a helical; Signal-anchor for type II membrane protein segment. At 36-172 (SDSPSPIVVV…MGLVVVLQRE (137 aa)) the chain is on the lumenal side. Catalysis depends on charge relay system residues serine 49, histidine 90, and aspartate 115. The C-terminal short (CTS) helix stretch occupies residues 158 to 169 (AMLGIMGLVVVL).

This sequence belongs to the peptidase S26B family. As to quaternary structure, component of the signal peptidase complex (SPC) composed of a catalytic subunit SEC11 and three accessory subunits SPC1, SPC2 and SPC3. The complex induces a local thinning of the ER membrane which is used to measure the length of the signal peptide (SP) h-region of protein substrates. This ensures the selectivity of the complex towards h-regions shorter than 18-20 amino acids. SPC associates with the translocon complex.

The protein resides in the endoplasmic reticulum membrane. The catalysed reaction is Cleavage of hydrophobic, N-terminal signal or leader sequences from secreted and periplasmic proteins.. In terms of biological role, catalytic component of the signal peptidase complex (SPC) which catalyzes the cleavage of N-terminal signal sequences from nascent proteins as they are translocated into the lumen of the endoplasmic reticulum. Specifically cleaves N-terminal signal peptides that contain a hydrophobic alpha-helix (h-region) shorter than 18-20 amino acids. The sequence is that of Signal peptidase complex catalytic subunit SEC11 (SEC11) from Colletotrichum graminicola (strain M1.001 / M2 / FGSC 10212) (Maize anthracnose fungus).